The following is a 272-amino-acid chain: Undecaprenyl-diphosphatase (272 aa).

7 consecutive transmembrane segments (helical) span residues 2–22, 43–63, 82–102, 110–130, 185–205, 224–244, and 252–272; these read FDII…FLPI, FINM…ILLY, WQLW…GLPL, LHTP…FIIL, YVAT…VSIL, VLMT…KWLL, and FKPF…VMFI.

Belongs to the UppP family.

The protein localises to the cell membrane. The enzyme catalyses di-trans,octa-cis-undecaprenyl diphosphate + H2O = di-trans,octa-cis-undecaprenyl phosphate + phosphate + H(+). Functionally, catalyzes the dephosphorylation of undecaprenyl diphosphate (UPP). Confers resistance to bacitracin. This Lacticaseibacillus paracasei (strain ATCC 334 / BCRC 17002 / CCUG 31169 / CIP 107868 / KCTC 3260 / NRRL B-441) (Lactobacillus paracasei) protein is Undecaprenyl-diphosphatase.